The chain runs to 252 residues: Type III pantothenate kinase (252 aa).

Residue aspartate 6 to alanine 13 coordinates ATP. Residue glycine 104–arginine 107 coordinates substrate. Catalysis depends on aspartate 106, which acts as the Proton acceptor. Residue aspartate 128 participates in K(+) binding. Threonine 131 is an ATP binding site. Residue threonine 183 coordinates substrate.

Belongs to the type III pantothenate kinase family. Homodimer. The cofactor is NH4(+). K(+) is required as a cofactor.

The protein resides in the cytoplasm. The catalysed reaction is (R)-pantothenate + ATP = (R)-4'-phosphopantothenate + ADP + H(+). It functions in the pathway cofactor biosynthesis; coenzyme A biosynthesis; CoA from (R)-pantothenate: step 1/5. Its function is as follows. Catalyzes the phosphorylation of pantothenate (Pan), the first step in CoA biosynthesis. The protein is Type III pantothenate kinase of Thermus thermophilus (strain ATCC BAA-163 / DSM 7039 / HB27).